Reading from the N-terminus, the 442-residue chain is Proline--tRNA ligase (442 aa).

It belongs to the class-II aminoacyl-tRNA synthetase family. ProS type 2 subfamily. In terms of assembly, homodimer.

It localises to the cytoplasm. The enzyme catalyses tRNA(Pro) + L-proline + ATP = L-prolyl-tRNA(Pro) + AMP + diphosphate. Its function is as follows. Catalyzes the attachment of proline to tRNA(Pro) in a two-step reaction: proline is first activated by ATP to form Pro-AMP and then transferred to the acceptor end of tRNA(Pro). This chain is Proline--tRNA ligase, found in Brucella ovis (strain ATCC 25840 / 63/290 / NCTC 10512).